A 358-amino-acid polypeptide reads, in one-letter code: DNA replication and repair protein RecF (358 aa).

30 to 37 lines the ATP pocket; sequence GNNGSGKT.

The protein belongs to the RecF family.

The protein localises to the cytoplasm. Functionally, the RecF protein is involved in DNA metabolism; it is required for DNA replication and normal SOS inducibility. RecF binds preferentially to single-stranded, linear DNA. It also seems to bind ATP. This Actinobacillus succinogenes (strain ATCC 55618 / DSM 22257 / CCUG 43843 / 130Z) protein is DNA replication and repair protein RecF.